A 406-amino-acid chain; its full sequence is Tryptophan synthase beta chain (406 aa).

The residue at position 99 (K99) is an N6-(pyridoxal phosphate)lysine.

Belongs to the TrpB family. As to quaternary structure, tetramer of two alpha and two beta chains. Requires pyridoxal 5'-phosphate as cofactor.

The catalysed reaction is (1S,2R)-1-C-(indol-3-yl)glycerol 3-phosphate + L-serine = D-glyceraldehyde 3-phosphate + L-tryptophan + H2O. It functions in the pathway amino-acid biosynthesis; L-tryptophan biosynthesis; L-tryptophan from chorismate: step 5/5. The beta subunit is responsible for the synthesis of L-tryptophan from indole and L-serine. Essential for production of nod factors and establishment of symbiosis. The chain is Tryptophan synthase beta chain from Rhizobium etli (strain ATCC 51251 / DSM 11541 / JCM 21823 / NBRC 15573 / CFN 42).